Here is a 211-residue protein sequence, read N- to C-terminus: Putative F-box protein At1g52490 (211 aa).

The region spanning 12 to 59 (EEEYLQLPLDLIVEILKKLPLKSLVRFRCVSKQFSTIICSLRDFIESV) is the F-box domain.

The protein is Putative F-box protein At1g52490 of Arabidopsis thaliana (Mouse-ear cress).